The following is a 359-amino-acid chain: tRNA N6-adenosine threonylcarbamoyltransferase (359 aa).

Residues histidine 115 and histidine 119 each coordinate Fe cation. Substrate-binding positions include 137–141 (LVSGG), aspartate 170, glycine 183, and asparagine 283. Fe cation is bound at residue aspartate 311. Residues 328–359 (APDSLDIAPRSRWPLDEKSAPVFGTGRRGAKA) are disordered.

It belongs to the KAE1 / TsaD family. The cofactor is Fe(2+).

Its subcellular location is the cytoplasm. The catalysed reaction is L-threonylcarbamoyladenylate + adenosine(37) in tRNA = N(6)-L-threonylcarbamoyladenosine(37) in tRNA + AMP + H(+). In terms of biological role, required for the formation of a threonylcarbamoyl group on adenosine at position 37 (t(6)A37) in tRNAs that read codons beginning with adenine. Is involved in the transfer of the threonylcarbamoyl moiety of threonylcarbamoyl-AMP (TC-AMP) to the N6 group of A37, together with TsaE and TsaB. TsaD likely plays a direct catalytic role in this reaction. The chain is tRNA N6-adenosine threonylcarbamoyltransferase from Brucella suis (strain ATCC 23445 / NCTC 10510).